Consider the following 442-residue polypeptide: DNA topoisomerase medium subunit (442 aa).

Residues 29–438 (IPNMIDGFKP…DVVTEYTKDL (410 aa)) form the Topo IIA-type catalytic domain. Residue Tyr117 is the O-(5'-phospho-DNA)-tyrosine intermediate of the active site.

This sequence belongs to the type II topoisomerase family. As to quaternary structure, part of the DNA topoisomerase complex made of gp39, gp52 and gp60. The cofactor is Mg(2+).

The enzyme catalyses ATP-dependent breakage, passage and rejoining of double-stranded DNA.. Its function is as follows. Medium subunit of the DNA topoisomerase that untwists superhelical DNA. Controls topological states of double-stranded DNA by transient breakage and subsequent rejoining of DNA strands. The chain is DNA topoisomerase medium subunit (52) from Enterobacteria phage T4 (Bacteriophage T4).